A 1238-amino-acid chain; its full sequence is uncharacterized protein (1238 aa).

7 disordered regions span residues 22–83 (LQSA…QEHL), 96–150 (SSRQ…IASP), 169–250 (FEPD…HQML), 264–694 (QLNS…AAMV), 739–915 (TKAA…SVPE), 936–955 (THSA…APHE), and 1057–1089 (PKIS…QCSS). Residues 35-49 (QPPNQQPHQTQQQQQ) show a composition bias toward low complexity. Residues 58 to 72 (PSIQNLTTNATPTST) show a composition bias toward polar residues. Residues 73–83 (QLQQQQQQEHL) are compositionally biased toward low complexity. Residues 96–110 (SSRQNQGAPSGNLSN) show a composition bias toward polar residues. Low complexity predominate over residues 125-145 (SVSGNTNHTGSNSSSNSGSNN). A compositionally biased stretch (polar residues) spans 188–204 (SASSASKLPTHNVQQQH). 3 stretches are compositionally biased toward low complexity: residues 272 to 287 (SYQH…QSHP), 309 to 334 (PLLT…SSQH), and 393 to 406 (SNEE…NSSN). A compositionally biased stretch (polar residues) spans 433–450 (SKPQHPQQAANLNNSCSP). Position 453 is a phosphoserine (Ser453). Residues 463–472 (PFSTQKQSQT) show a composition bias toward polar residues. A compositionally biased stretch (basic and acidic residues) spans 523 to 536 (TEQHRMQQDDEPPK). Low complexity-rich tracts occupy residues 549–570 (QSNS…SQSS) and 632–641 (TTAAVAAPPA). The residue at position 642 (Thr642) is a Phosphothreonine. Residues 678–688 (ERISSPEKPAE) are compositionally biased toward basic and acidic residues. Phosphoserine occurs at positions 682, 749, and 753. Residues 755–764 (IPQSRSTSTP) show a composition bias toward polar residues. A phosphoserine mark is found at Ser793 and Ser799. Positions 832-860 (STSAAAAAALAARQLSEAASATKSKPAAG) are enriched in low complexity. Positions 861-874 (AKKKNAGVKGKKGS) are enriched in basic residues. Positions 937–947 (HSAEDVNEKQT) are enriched in basic and acidic residues. The segment covering 1071 to 1089 (DSSISYSDDPNESRSQCSS) has biased composition (polar residues). The C2HC pre-PHD-type; degenerate zinc-finger motif lies at 1089–1131 (SVDLLDCSTESKFVETFRGMGKTSENGFEVWLHEDCAVWSNDI). At Ser1099 the chain carries Phosphoserine. The PHD-type zinc-finger motif lies at 1151-1199 (YQCVLCQQTGASICCFQRCCKAAAHVPCGRSANWSLSEEDRKVYCHLHR).

This is an uncharacterized protein from Drosophila melanogaster (Fruit fly).